A 1058-amino-acid chain; its full sequence is Carbamoyl phosphate synthase large chain (1058 aa).

The tract at residues 1-401 (MPKRKDIQKI…SLLKACRSLE (401 aa)) is carboxyphosphate synthetic domain. Positions 129, 169, 175, 176, 208, 210, 215, 241, 242, 243, 284, and 298 each coordinate ATP. The 195-residue stretch at 133–327 (KQLMQELDQP…IAKLAAKIAV (195 aa)) folds into the ATP-grasp 1 domain. Mg(2+) is bound by residues Gln284, Glu298, and Asn300. The Mn(2+) site is built by Gln284, Glu298, and Asn300. An oligomerization domain region spans residues 402 to 546 (IGVCHNEMTS…YSTYELENES (145 aa)). The carbamoyl phosphate synthetic domain stretch occupies residues 547–929 (VQSNKESILV…ALYKAFEANN (383 aa)). Positions 671–861 (EKALKELGIP…MAQIATKLIL (191 aa)) constitute an ATP-grasp 2 domain. 10 residues coordinate ATP: Arg707, Ser746, Ile748, Glu752, Gly777, Val778, His779, Ser780, Gln820, and Glu832. Residues Gln820, Glu832, and Asn834 each coordinate Mg(2+). Residues Gln820, Glu832, and Asn834 each coordinate Mn(2+). An MGS-like domain is found at 930-1058 (SHLSEFGQIV…ESRCFNIEAI (129 aa)). Residues 930–1058 (SHLSEFGQIV…ESRCFNIEAI (129 aa)) form an allosteric domain region.

Belongs to the CarB family. As to quaternary structure, composed of two chains; the small (or glutamine) chain promotes the hydrolysis of glutamine to ammonia, which is used by the large (or ammonia) chain to synthesize carbamoyl phosphate. Tetramer of heterodimers (alpha,beta)4. The cofactor is Mg(2+). It depends on Mn(2+) as a cofactor.

It carries out the reaction hydrogencarbonate + L-glutamine + 2 ATP + H2O = carbamoyl phosphate + L-glutamate + 2 ADP + phosphate + 2 H(+). The catalysed reaction is hydrogencarbonate + NH4(+) + 2 ATP = carbamoyl phosphate + 2 ADP + phosphate + 2 H(+). It functions in the pathway amino-acid biosynthesis; L-arginine biosynthesis; carbamoyl phosphate from bicarbonate: step 1/1. It participates in pyrimidine metabolism; UMP biosynthesis via de novo pathway; (S)-dihydroorotate from bicarbonate: step 1/3. In terms of biological role, large subunit of the glutamine-dependent carbamoyl phosphate synthetase (CPSase). CPSase catalyzes the formation of carbamoyl phosphate from the ammonia moiety of glutamine, carbonate, and phosphate donated by ATP, constituting the first step of 2 biosynthetic pathways, one leading to arginine and/or urea and the other to pyrimidine nucleotides. The large subunit (synthetase) binds the substrates ammonia (free or transferred from glutamine from the small subunit), hydrogencarbonate and ATP and carries out an ATP-coupled ligase reaction, activating hydrogencarbonate by forming carboxy phosphate which reacts with ammonia to form carbamoyl phosphate. This chain is Carbamoyl phosphate synthase large chain, found in Streptococcus pyogenes serotype M3 (strain ATCC BAA-595 / MGAS315).